We begin with the raw amino-acid sequence, 593 residues long: Developmental and secondary metabolism regulator VEL1 (593 aa).

Residues 1–16 (MSNIVVSNETKSQSVR) show a composition bias toward polar residues. The disordered stretch occupies residues 1 to 21 (MSNIVVSNETKSQSVRTTKDG). The Velvet domain occupies 21-212 (GRQIRYNLQV…AEQGCRVRIR (192 aa)). The Nuclear localization signal motif lies at 35–40 (ERARAC). A disordered region spans residues 218–569 (RRRENKSSKE…PGSPDMEEPM (352 aa)). Positions 310–326 (PSYGSNQPQYSQQYQTP) are enriched in low complexity. Pro residues predominate over residues 327-340 (QPAPMMQPPQPPQH). 2 stretches are compositionally biased toward low complexity: residues 341–360 (STPY…HQAQ) and 367–389 (QQYG…QPQY). 2 stretches are compositionally biased toward polar residues: residues 413–429 (SSIT…SSHP) and 440–449 (GRSQQMSQPL). Residues 443 to 487 (QQMSQPLHSSPQSYASSAPSHQSLPSLRPIVADKLEPVSPSYQSP) are PEST. The span at 450-465 (HSSPQSYASSAPSHQS) shows a compositional bias: low complexity. 2 stretches are compositionally biased toward polar residues: residues 482-505 (PSYQ…SNQH) and 512-534 (NPQT…SSTF).

Belongs to the velvet family. VeA subfamily. In terms of assembly, component of the heterotrimeric velvet complex composed of LAE1, VEL1 and VEL2; VEL1 acting as a bridging protein between LAE1 and VEL2.

It is found in the nucleus. The protein resides in the cytoplasm. Component of the velvet transcription factor complex that controls sexual/asexual developmental ratio in response to light, promoting sexual development in the darkness while stimulating asexual sporulation under illumination. The velvet complex acts as a global regulator for secondary metabolite gene expression. Controls the expression of the T-toxin gene cluster. Promotes oxidative stress tolerance and acts as a virulence factors during infection. Negatively regulate mycelial pigmentation and controls sexual development, as well as asexual development during vegetative growth. The chain is Developmental and secondary metabolism regulator VEL1 from Cochliobolus heterostrophus (strain C5 / ATCC 48332 / race O) (Southern corn leaf blight fungus).